We begin with the raw amino-acid sequence, 226 residues long: Cytidylate kinase (226 aa).

An ATP-binding site is contributed by 10-18 (GPAGAGKST).

It belongs to the cytidylate kinase family. Type 1 subfamily.

The protein resides in the cytoplasm. The catalysed reaction is CMP + ATP = CDP + ADP. The enzyme catalyses dCMP + ATP = dCDP + ADP. The protein is Cytidylate kinase of Caldicellulosiruptor saccharolyticus (strain ATCC 43494 / DSM 8903 / Tp8T 6331).